The primary structure comprises 585 residues: Protein cereblon (585 aa).

2 disordered regions span residues 1-109 (MDEE…DLES) and 156-195 (FSQE…IGFD). Residues 80–95 (QDDTASEGSHPSSDMS) are compositionally biased toward polar residues. Over residues 158–167 (QERRRSRTSE) the composition is skewed to basic and acidic residues. The span at 178-189 (VDPPPQQPPRPP) shows a compositional bias: pro residues. Residues 225-451 (HMLIFLHQHI…LIKSTFKDET (227 aa)) form the Lon N-terminal domain. The CULT domain occupies 450 to 559 (ETLFFCRYCN…LAGSSVRIGK (110 aa)). C455, C458, C524, and C527 together coordinate Zn(2+).

This sequence belongs to the CRBN family. Likely a component of a DCX (DDB1-CUL4-X-box) protein ligase complex. May interact with pic/DDB1. Ubiquitinated. In terms of tissue distribution, expressed in the fat body (at protein level).

It is found in the nucleus. It participates in protein modification; protein ubiquitination. In terms of biological role, substrate recognition component of a DCX (DDB1-CUL4-X-box) E3 protein ligase complex that mediates the ubiquitination and subsequent proteasomal degradation of target proteins. Has an essential role in mediating growth by negatively regulating insulin signaling. It also has a role in maintaining presynaptic function in the neuromuscular junction synapses of third-instar larvae. This chain is Protein cereblon, found in Drosophila melanogaster (Fruit fly).